We begin with the raw amino-acid sequence, 675 residues long: Electrogenic aspartate/glutamate antiporter SLC25A13, mitochondrial (675 aa).

Ala-2 carries the post-translational modification N-acetylalanine. Residues 2–295 (AAAKVALTKR…TLADIERIAP (294 aa)) are regulatory N-terminal domain. The Mitochondrial intermembrane segment spans residues 2-331 (AAAKVALTKR…LLQVAESAYR (330 aa)). EF-hand domains are found at residues 51–86 (SQPN…SVLC), 87–122 (APDA…TTIH), 125–157 (IPFN…FLLE), and 158–193 (IQLE…IRPH). Residues Asp-66, Thr-68, Asp-70, Leu-72, and Glu-77 each contribute to the Ca(2+) site. Residues 296–311 (LEEGTLPFNLAEAQRQ) are linker loop domain. The tract at residues 321–612 (VLLQVAESAY…LQRWFYIDFG (292 aa)) is carrier domain. Solcar repeat units lie at residues 326 to 418 (AESA…VRDK), 426 to 510 (VPLA…VKAS), and 518 to 606 (VSPG…LQRW). A helical membrane pass occupies residues 332-349 (FGLGSVAGAVGATAVYPI). The Mitochondrial matrix segment spans residues 350-392 (DLVKTRMQNQRSTGSFVGELMYKNSFDCFKKVLRYEGFFGLYR). 2 positions are modified to N6-acetyllysine: Lys-353 and Lys-372. A helical transmembrane segment spans residues 393–412 (GLLPQLLGVAPEKAIKLTVN). Residues 413–435 (DFVRDKFMHKDGSVPLAAEILAG) are Mitochondrial intermembrane-facing. A helical transmembrane segment spans residues 436 to 449 (GCAGGSQVIFTNPL). Residues 450 to 484 (EIVKIRLQVAGEITTGPRVSALSVVRDLGFFGIYK) are Mitochondrial matrix-facing. N6-methyllysine is present on Lys-453. Lys-484 carries the post-translational modification N6-acetyllysine; alternate. An N6-succinyllysine; alternate modification is found at Lys-484. The helical transmembrane segment at 485–504 (GAKACFLRDIPFSAIYFPCY) threads the bilayer. The Mitochondrial intermembrane segment spans residues 505-523 (AHVKASFANEDGQVSPGSL). Residues 524-541 (LLAGAIAGMPAASLVTPA) form a helical membrane-spanning segment. At 542–580 (DVIKTRLQVAARAGQTTYSGVIDCFRKILREEGPKALWK) the chain is on the mitochondrial matrix side. Position 580 is an N6-succinyllysine (Lys-580). The helical transmembrane segment at 581 to 600 (GAGARVFRSSPQFGVTLLTY) threads the bilayer. At 601-675 (ELLQRWFYID…STSKAIGGGP (75 aa)) the chain is on the mitochondrial intermembrane side. The tract at residues 613–675 (GVKPMGSEPV…STSKAIGGGP (63 aa)) is C-terminal domain. Lys-662 is subject to N6-acetyllysine. Position 666 is a phosphoserine (Ser-666).

Belongs to the mitochondrial carrier (TC 2.A.29) family. As to quaternary structure, homodimer (via N-terminus). High levels in liver and low levels in kidney, pancreas, placenta, heart and brain.

Its subcellular location is the mitochondrion inner membrane. The catalysed reaction is L-aspartate(in) + L-glutamate(out) + H(+)(out) = L-aspartate(out) + L-glutamate(in) + H(+)(in). It carries out the reaction 3-sulfino-L-alanine(out) + L-glutamate(in) + H(+)(in) = 3-sulfino-L-alanine(in) + L-glutamate(out) + H(+)(out). The enzyme catalyses 3-sulfino-L-alanine(out) + L-aspartate(in) = 3-sulfino-L-alanine(in) + L-aspartate(out). Its activity is regulated as follows. Activated by calcium-binding in the mitochondrial intermembrane space. Inhibited by pyridoxal 5'-phosphate, bathophenathroline, mercurials, diethyl pyrocarbonate and N-ethylmaleimide. In terms of biological role, mitochondrial electrogenic aspartate/glutamate antiporter that favors efflux of aspartate and entry of glutamate and proton within the mitochondria as part of the malate-aspartate shuttle. Also mediates the uptake of L-cysteinesulfinate (3-sulfino-L-alanine) by mitochondria in exchange of L-glutamate and proton. Can also exchange L-cysteinesulfinate with aspartate in their anionic form without any proton translocation. Lacks transport activity towards gamma-aminobutyric acid (GABA). The protein is Electrogenic aspartate/glutamate antiporter SLC25A13, mitochondrial of Homo sapiens (Human).